Reading from the N-terminus, the 320-residue chain is F-box protein At2g02240 (320 aa).

The 47-residue stretch at 58 to 104 (TSPFDVLPEDCISNIISFTSPRDACVAASVSKTFESAVSSDCVWDKF) folds into the F-box domain.

The sequence is that of F-box protein At2g02240 from Arabidopsis thaliana (Mouse-ear cress).